A 358-amino-acid chain; its full sequence is Testis-specific serine/threonine-protein kinase 2 (358 aa).

Residues 12 to 272 (YIVGINLGKG…IDEILSHSWL (261 aa)) form the Protein kinase domain. ATP contacts are provided by residues 18 to 26 (LGKGSYAKV) and K41. Catalysis depends on D136, which acts as the Proton acceptor. Composition is skewed to basic and acidic residues over residues 296–315 (DCKL…DHKL) and 329–358 (NEDR…KAST). The interval 296-358 (DCKLDTRPGS…SGAEVEKAST (63 aa)) is disordered.

This sequence belongs to the protein kinase superfamily. CAMK Ser/Thr protein kinase family. Interacts with TSSK1B. Interacts with HSP90; this interaction stabilizes TSSK2. Mg(2+) serves as cofactor. In terms of processing, autophosphorylated. Ubiquitinated; HSP90 activity negatively regulates ubiquitination and degradation. In terms of tissue distribution, testis-specific. Expressed only in the spermatids postmeiotically at the final stages of cytodifferentiation in the seminiferous tubules (at protein level). Not detected in released sperms in the lumen of the seminiferous tubules. Also present in the epididymal sperm (at protein level).

Its subcellular location is the cytoplasm. It is found in the cytoskeleton. The protein localises to the microtubule organizing center. It localises to the centrosome. The protein resides in the centriole. Its subcellular location is the cytoplasmic vesicle. It is found in the secretory vesicle. The protein localises to the acrosome. The enzyme catalyses L-seryl-[protein] + ATP = O-phospho-L-seryl-[protein] + ADP + H(+). The catalysed reaction is L-threonyl-[protein] + ATP = O-phospho-L-threonyl-[protein] + ADP + H(+). Activated by phosphorylation on Thr-174, potentially by autophosphorylation. Testis-specific serine/threonine-protein kinase required during spermatid development. Phosphorylates 'Ser-281' of TSKS and SPAG16. Involved in the late stages of spermatogenesis, during the reconstruction of the cytoplasm. During spermatogenesis, required for the transformation of a ring-shaped structure around the base of the flagellum originating from the chromatoid body. The sequence is that of Testis-specific serine/threonine-protein kinase 2 (Tssk2) from Mus musculus (Mouse).